The following is a 468-amino-acid chain: Cytochrome P450-like protein L532 (468 aa).

The next 2 membrane-spanning stretches (helical) occupy residues 22-42 (WFAY…FGLI) and 172-192 (VTVL…GVDV). Residue Cys415 coordinates heme.

This sequence belongs to the cytochrome P450 family. The cofactor is heme.

Its subcellular location is the host membrane. It is found in the virion. This chain is Cytochrome P450-like protein L532, found in Acanthamoeba polyphaga mimivirus (APMV).